A 538-amino-acid chain; its full sequence is CTP synthase (538 aa).

The interval 1-270 is amidoligase domain; sequence MSRTKFIFVT…DEVVLKTMGM (270 aa). Ser-15 lines the CTP pocket. Ser-15 is a binding site for UTP. 16–21 contacts ATP; the sequence is SLGKGV. Residue Tyr-56 coordinates L-glutamine. An ATP-binding site is contributed by Asp-73. Mg(2+)-binding residues include Asp-73 and Glu-143. CTP is bound by residues 150-152, 190-195, and Lys-226; these read DIE and KTKPTQ. Residues 190 to 195 and Lys-226 contribute to the UTP site; that span reads KTKPTQ. Residues 295-537 form the Glutamine amidotransferase type-1 domain; the sequence is QIAVVGKYIS…IRASVKYSKK (243 aa). Residue Gly-357 participates in L-glutamine binding. Cys-384 serves as the catalytic Nucleophile; for glutamine hydrolysis. L-glutamine-binding positions include 385 to 388, Glu-408, and Arg-465; that span reads LGMQ. Active-site residues include His-510 and Glu-512.

It belongs to the CTP synthase family. As to quaternary structure, homotetramer.

The catalysed reaction is UTP + L-glutamine + ATP + H2O = CTP + L-glutamate + ADP + phosphate + 2 H(+). The enzyme catalyses L-glutamine + H2O = L-glutamate + NH4(+). It catalyses the reaction UTP + NH4(+) + ATP = CTP + ADP + phosphate + 2 H(+). It participates in pyrimidine metabolism; CTP biosynthesis via de novo pathway; CTP from UDP: step 2/2. Its activity is regulated as follows. Allosterically activated by GTP, when glutamine is the substrate; GTP has no effect on the reaction when ammonia is the substrate. The allosteric effector GTP functions by stabilizing the protein conformation that binds the tetrahedral intermediate(s) formed during glutamine hydrolysis. Inhibited by the product CTP, via allosteric rather than competitive inhibition. In terms of biological role, catalyzes the ATP-dependent amination of UTP to CTP with either L-glutamine or ammonia as the source of nitrogen. Regulates intracellular CTP levels through interactions with the four ribonucleotide triphosphates. The protein is CTP synthase of Leptospira interrogans serogroup Icterohaemorrhagiae serovar copenhageni (strain Fiocruz L1-130).